The primary structure comprises 1140 residues: Rho GTPase-activating protein gacF (1140 aa).

Disordered regions lie at residues 1 to 145, 189 to 236, 455 to 504, 520 to 644, 661 to 700, 720 to 759, 773 to 927, and 952 to 1095; these read MKTH…KPSR, ESDI…IEPI, INNN…STSF, EVQQ…GLES, ESSK…DEDE, ETND…NNIS, AKVT…STLS, and TSSP…NHTN. Low complexity-rich tracts occupy residues 10 to 26 and 35 to 71; these read LGGL…LKSF and QQQQ…ASSS. The stretch at 28-55 forms a coiled coil; that stretch reads TEEVIHEQQQQQQQHNNNNNNNNNHQRQ. Over residues 72-82 the composition is skewed to polar residues; sequence IEETSGYLSKT. Low complexity-rich tracts occupy residues 83-136 and 193-222; these read SSSS…TSSP and DNGS…SSSS. The region spanning 234–409 is the Rho-GAP domain; that stretch reads EPISQSTEDY…RLIENYHSIF (176 aa). Composition is skewed to low complexity over residues 456–475 and 482–493; these read NNNS…SPYK and PKSSPKLNNRNS. The segment covering 494–504 has biased composition (polar residues); the sequence is ISPKLSSSTSF. A coiled-coil region spans residues 517-548; the sequence is ISDEVQQEQQNQQQQQDEQQDEQQDEQQDEQQ. Low complexity predominate over residues 520-533; sequence EVQQEQQNQQQQQD. Over residues 534 to 549 the composition is skewed to acidic residues; it reads EQQDEQQDEQQDEQQD. Over residues 550-566 the composition is skewed to low complexity; it reads EQNSNSTSINTSSSSIT. Residues 572–596 are compositionally biased toward polar residues; that stretch reads STVQYLNRINTCRRPSSWTNNNRIK. Positions 597–606 are enriched in basic residues; the sequence is QQQHHHHHHQ. Residues 607–631 are compositionally biased toward low complexity; that stretch reads QQQQHQQHQQQQSSSSESNSSLTSS. 2 stretches are compositionally biased toward polar residues: residues 632-641 and 672-684; these read PQKRLNSVNG and NRQM…NNIG. The segment covering 724–759 has biased composition (low complexity); it reads DNNNNDQINNSNSSNNIPKTTITTTTNNTTTTNNIS. Polar residues predominate over residues 773 to 796; the sequence is AKVTPTPTPAPMQTSSFLSTKQTN. Over residues 797-822 the composition is skewed to low complexity; it reads SPSSSSSPSSTVSSTSSSPSSSLSSS. The span at 823–854 shows a compositional bias: polar residues; the sequence is IDNKTMSNVNYNRFQPANRTVSSPNVRNFSVP. Composition is skewed to low complexity over residues 891 to 914, 952 to 1058, and 1065 to 1079; these read KPKN…NSTP, TSSP…TSST, and HSNS…SSSS.

Its subcellular location is the cytoplasm. Its function is as follows. Rho GTPase-activating protein involved in the signal transduction pathway. This chain is Rho GTPase-activating protein gacF (gacF), found in Dictyostelium discoideum (Social amoeba).